Consider the following 137-residue polypeptide: NADPH-dependent 7-cyano-7-deazaguanine reductase (137 aa).

Cys-45 (thioimide intermediate) is an active-site residue. Asp-52 (proton donor) is an active-site residue. Substrate is bound by residues 68–70 and 87–88; these read VEL and QE.

This sequence belongs to the GTP cyclohydrolase I family. QueF type 1 subfamily.

It is found in the cytoplasm. The enzyme catalyses 7-aminomethyl-7-carbaguanine + 2 NADP(+) = 7-cyano-7-deazaguanine + 2 NADPH + 3 H(+). The protein operates within tRNA modification; tRNA-queuosine biosynthesis. In terms of biological role, catalyzes the NADPH-dependent reduction of 7-cyano-7-deazaguanine (preQ0) to 7-aminomethyl-7-deazaguanine (preQ1). This chain is NADPH-dependent 7-cyano-7-deazaguanine reductase, found in Thermotoga petrophila (strain ATCC BAA-488 / DSM 13995 / JCM 10881 / RKU-1).